We begin with the raw amino-acid sequence, 280 residues long: Myelin proteolipid protein B (280 aa).

Residues 1 to 10 are Cytoplasmic-facing; it reads MGWHDGCIRC. Residues cysteine 7 and cysteine 10 are each lipidated (S-palmitoyl cysteine). A helical transmembrane segment spans residues 11 to 36; sequence MVGVPFASVIATVLCFAGVALFCGCG. The Extracellular segment spans residues 37–59; the sequence is HEALSGTEKLIETYFSKNYQEYE. Residues 60-88 traverse the membrane as a helical segment; sequence YLIHVINAFQYVIYGIAIFFFLYGILLLA. Residues 89-152 lie on the Cytoplasmic side of the membrane; sequence EGFYTTTAIK…LGKWLGHPDK (64 aa). Residues cysteine 140 and cysteine 142 are each lipidated (S-palmitoyl cysteine). A helical transmembrane segment spans residues 153-179; sequence FVGVTYVITILWILIFACSAVPVYIYF. Over 180 to 239 the chain is Extracellular; it reads NTWVTCQSIAFPGKTTTSVSTLCLDARMYGVLPWNAFPGKVCGTSLLAICKTSEFQMTFH. Cystine bridges form between cysteine 185-cysteine 229 and cysteine 202-cysteine 221. A helical membrane pass occupies residues 240-269; the sequence is LFIAAFVGAAATLVALLTYMVGASFNYAVL. At 270 to 280 the chain is on the cytoplasmic side; sequence RVTGRSDRSKF.

The protein belongs to the myelin proteolipid protein family.

Its subcellular location is the cell membrane. This is the major myelin protein from the central nervous system. It plays an important role in the formation or maintenance of the multilamellar structure of myelin. This is Myelin proteolipid protein B (plp1-b) from Xenopus laevis (African clawed frog).